Here is a 248-residue protein sequence, read N- to C-terminus: Mannosylfructose-phosphate phosphatase (248 aa).

The protein belongs to the sucrose phosphatase family.

It carries out the reaction beta-D-fructofuranosyl alpha-D-mannopyranoside 6(F)-phosphate + H2O = beta-D-fructofuranosyl alpha-D-mannopyranoside + phosphate. Its pathway is carbohydrate metabolism; mannosylfructose biosynthesis; beta-D-fructofuranosyl alpha-D-mannopyranoside from D-fructose 6-phosphate and GDP-alpha-D-mannose: step 2/2. With respect to regulation, inhibited by the phosphatase inhibitors fluoride, molybdate and orthovanadate. This is Mannosylfructose-phosphate phosphatase from Agrobacterium fabrum (strain C58 / ATCC 33970) (Agrobacterium tumefaciens (strain C58)).